Reading from the N-terminus, the 624-residue chain is Ceramide transfer protein (624 aa).

A compositionally biased stretch (polar residues) spans Met1–Gly11. Residues Met1–Val24 form a disordered region. Positions Pro23 to Thr117 constitute a PH domain. Ser126 is modified (phosphoserine). Phosphoserine; by PKD is present on Ser132. The residue at position 135 (Ser135) is a Phosphoserine. The stretch at Ile263 to His303 forms a coiled coil. A Phosphoserine modification is found at Ser315. Residues Glu321 to Glu327 carry the FFAT motif. Phosphotyrosine is present on Tyr372. Residues Ser373, Ser377, and Ser380 each carry the phosphoserine modification. Residues Asp389 to Ala618 form the START domain. Positions 472, 493, 530, and 579 each coordinate an N-acylsphing-4-enine.

In terms of assembly, interacts with VAPA and VAPB. Interaction with VAPB is less efficient than with VAPA. Interacts (via FFAT motif) with the MOSPD2 (via MSP domain). Phosphorylation on Ser-132 decreases the affinity toward phosphatidylinositol 4-phosphate at Golgi membranes and reduces ceramide transfer activity. Inactivated by hyperphosphorylation of serine residues by CSNK1G2/CK1 that triggers dissociation from the Golgi complex, thus down-regulating ER-to-Golgi transport of ceramide and sphingomyelin synthesis.

The protein resides in the cytoplasm. It is found in the golgi apparatus. It localises to the endoplasmic reticulum. The catalysed reaction is N-hexadecanoylsphing-4-enine(in) = N-hexadecanoylsphing-4-enine(out). Shelters ceramides and diacylglycerol lipids inside its START domain and mediates the intracellular trafficking of ceramides and diacylglycerol lipids in a non-vesicular manner. The polypeptide is Ceramide transfer protein (CERT1) (Pongo abelii (Sumatran orangutan)).